The primary structure comprises 273 residues: Translation initiation factor IF-3, mitochondrial (273 aa).

A mitochondrion-targeting transit peptide spans 1–32; that stretch reads MAALFLKKLTLQTVKTENYCIRRCLGKYILQG. A propeptide spans 33–92 (removed in mature form); that stretch reads PAPTQQPPRPSCLIHAKAFSTEDTQDEMTKKKKNETAFSSVGRKINERIIHVLDEQGNDL. The interval 242–273 is disordered; that stretch reads EEAAWKAAPDTPRRDALNGGDGKDGASGVLPQ. The span at 252–265 shows a compositional bias: basic and acidic residues; that stretch reads TPRRDALNGGDGKD.

Belongs to the IF-3 family.

The protein resides in the mitochondrion. Functionally, IF-3 binds to the 28S ribosomal subunit and shifts the equilibrium between 55S ribosomes and their 39S and 28S subunits in favor of the free subunits, thus enhancing the availability of 28S subunits on which protein synthesis initiation begins. The polypeptide is Translation initiation factor IF-3, mitochondrial (MTIF3) (Bos taurus (Bovine)).